A 2153-amino-acid chain; its full sequence is RNA-directed RNA polymerase L (2153 aa).

Residues His36, Glu54, Asp97, Glu110, and Val111 each coordinate Mn(2+). Residue Lys124 is the For endonuclease activity of the active site. The region spanning 957–1143 (TGNVIKFKRR…AVNQEMWKSM (187 aa)) is the RdRp catalytic domain. Asp1100 serves as a coordination point for Mg(2+). The segment at 1291-2153 (KQAFYSYKHT…FPHDPVSSFY (863 aa)) is interaction with the viral nucleoprotein.

It belongs to the Bunyavirales RNA polymerase family. As to quaternary structure, interacts with the viral nucleoprotein; this interaction is required for RdRp function. The cofactor is Mn(2+). Mg(2+) is required as a cofactor.

The protein localises to the host cytoplasm. Its subcellular location is the host perinuclear region. It carries out the reaction RNA(n) + a ribonucleoside 5'-triphosphate = RNA(n+1) + diphosphate. RNA-dependent RNA polymerase, which is responsible for the replication and transcription of the viral RNA genome using antigenomic RNA as an intermediate. During transcription, synthesizes subgenomic RNAs and assures their capping by a cap-snatching mechanism, which involves the endonuclease activity cleaving the host capped pre-mRNAs. These short capped RNAs are then used as primers for viral transcription. Cleaves ssRNA substrates but not DNA. Seems to downregulate the expression of its own and heterologous mRNAs through its endonuclease activity. This chain is RNA-directed RNA polymerase L, found in Sin Nombre orthohantavirus (SNV).